We begin with the raw amino-acid sequence, 240 residues long: Methylthioribulose-1-phosphate dehydratase (240 aa).

A compositionally biased stretch (polar residues) spans 1–17 (MAQEVENNNNDHLVQSS). A disordered region spans residues 1-20 (MAQEVENNNNDHLVQSSDPE). C100 is a binding site for substrate. Residues H117 and H119 each contribute to the Zn(2+) site. E146 serves as the catalytic Proton donor/acceptor. H202 provides a ligand contact to Zn(2+).

The protein belongs to the aldolase class II family. MtnB subfamily. It depends on Zn(2+) as a cofactor.

It is found in the cytoplasm. It catalyses the reaction 5-(methylsulfanyl)-D-ribulose 1-phosphate = 5-methylsulfanyl-2,3-dioxopentyl phosphate + H2O. It functions in the pathway amino-acid biosynthesis; L-methionine biosynthesis via salvage pathway; L-methionine from S-methyl-5-thio-alpha-D-ribose 1-phosphate: step 2/6. Catalyzes the dehydration of methylthioribulose-1-phosphate (MTRu-1-P) into 2,3-diketo-5-methylthiopentyl-1-phosphate (DK-MTP-1-P). The sequence is that of Methylthioribulose-1-phosphate dehydratase from Neosartorya fischeri (strain ATCC 1020 / DSM 3700 / CBS 544.65 / FGSC A1164 / JCM 1740 / NRRL 181 / WB 181) (Aspergillus fischerianus).